The chain runs to 372 residues: sn-glycerol-3-phosphate import ATP-binding protein UgpC (372 aa).

The ABC transporter domain maps to 2–233; the sequence is LDIKQLVKTY…PASTFVASFI (232 aa). 35 to 42 serves as a coordination point for ATP; that stretch reads GPSGCGKS.

Belongs to the ABC transporter superfamily. sn-glycerol-3-phosphate importer (TC 3.A.1.1.3) family. As to quaternary structure, the complex is composed of two ATP-binding proteins (UgpC), two transmembrane proteins (UgpA and UgpE) and a solute-binding protein (UgpB).

The protein resides in the cell inner membrane. The catalysed reaction is sn-glycerol 3-phosphate(out) + ATP + H2O = sn-glycerol 3-phosphate(in) + ADP + phosphate + H(+). Its function is as follows. Part of the ABC transporter complex UgpBAEC involved in sn-glycerol-3-phosphate (G3P) import. Responsible for energy coupling to the transport system. In Vibrio cholerae serotype O1 (strain ATCC 39315 / El Tor Inaba N16961), this protein is sn-glycerol-3-phosphate import ATP-binding protein UgpC.